We begin with the raw amino-acid sequence, 1218 residues long: Formin-A (1218 aa).

Positions 1–108 (MADKLYQIKL…ILGEACNYSV (108 aa)) constitute a C2 domain. Positions 139–539 (EEKKRHDEIQ…QISLRDKNIG (401 aa)) constitute a GBD/FH3 domain. A coiled-coil region spans residues 563–638 (LKSQIESLKK…QLKLTQGTAK (76 aa)). The interval 634–762 (QGTAKPDSAA…KAAAPPRKEV (129 aa)) is disordered. A compositionally biased stretch (pro residues) spans 649–747 (APPPPPPPMT…FGKGPPPPPG (99 aa)). Positions 652 to 737 (PPPPPMTGGG…AGGPPPPPPP (86 aa)) constitute an FH1 domain. The region spanning 759–1155 (RKEVPVPALK…IAKREAAKKL (397 aa)) is the FH2 domain. Positions 1034–1061 (SLSQVQAEVATLRKEFVQVQKSIETLNS) form a coiled coil. Disordered stretches follow at residues 1153–1179 (KKLK…TVEV) and 1198–1218 (KNRR…PIDL). The 36-residue stretch at 1174–1209 (GETVEVKESVVDDLLDTIASGDAFKNRRRRARKTDQ) folds into the DAD domain.

It belongs to the formin homology family. Diaphanous subfamily. As to quaternary structure, interacts (via GBD/FH3 domain) with activated Rho-GTPases.

Its function is as follows. Formins play an important role in the nucleation of actin and the formation of linear actin filaments. The protein is Formin-A (forA) of Dictyostelium discoideum (Social amoeba).